Consider the following 255-residue polypeptide: uncharacterized protein (255 aa).

A signal peptide spans 1-23 (MKRLNKLVLGIIFLFLVISITAG). Residue Cys-24 is the site of N-palmitoyl cysteine attachment. Cys-24 carries S-diacylglycerol cysteine lipidation.

Belongs to the staphylococcal tandem lipoprotein family.

The protein localises to the cell membrane. This is an uncharacterized protein from Staphylococcus aureus (strain Mu50 / ATCC 700699).